Reading from the N-terminus, the 306-residue chain is Elongation factor Ts (306 aa).

The segment at 80–83 is involved in Mg(2+) ion dislocation from EF-Tu; that stretch reads TDFV.

It belongs to the EF-Ts family.

It is found in the cytoplasm. Associates with the EF-Tu.GDP complex and induces the exchange of GDP to GTP. It remains bound to the aminoacyl-tRNA.EF-Tu.GTP complex up to the GTP hydrolysis stage on the ribosome. In Clostridium acetobutylicum (strain ATCC 824 / DSM 792 / JCM 1419 / IAM 19013 / LMG 5710 / NBRC 13948 / NRRL B-527 / VKM B-1787 / 2291 / W), this protein is Elongation factor Ts.